The primary structure comprises 185 residues: MGLEEKLPSGVLLTTVEQIVGFVRKTSMWPATFGLACCAIEMMAAGGPRFDIARFGMERFSATPRQADLMIVAGRVSQKMAPVLRTIYDQMAEPKWVIAMGVCASSGGMFNNYAIVQGVDHIVPVDIYLPGCPPRPEMLLDAILKLHDKVQNTKLGVHREREIEELEQRRLRALPLIQQTEEATR.

C37, C38, C103, and C132 together coordinate [4Fe-4S] cluster.

It belongs to the complex I 20 kDa subunit family. In terms of assembly, NDH-1 is composed of 14 different subunits. Subunits NuoB, C, D, E, F, and G constitute the peripheral sector of the complex. [4Fe-4S] cluster serves as cofactor.

The protein resides in the cell membrane. It carries out the reaction a quinone + NADH + 5 H(+)(in) = a quinol + NAD(+) + 4 H(+)(out). Its function is as follows. NDH-1 shuttles electrons from NADH, via FMN and iron-sulfur (Fe-S) centers, to quinones in the respiratory chain. The immediate electron acceptor for the enzyme in this species is believed to be a menaquinone. Couples the redox reaction to proton translocation (for every two electrons transferred, four hydrogen ions are translocated across the cytoplasmic membrane), and thus conserves the redox energy in a proton gradient. The polypeptide is NADH-quinone oxidoreductase subunit B (Thermobifida fusca (strain YX)).